A 225-amino-acid polypeptide reads, in one-letter code: E3 ubiquitin-protein ligase ATL76 (225 aa).

A helical membrane pass occupies residues 59-79 (LMLLSVLICGIICCLGLHYII). The segment at 135–177 (CVICLSDFVSGEQLRLLPKCNHGFHVRCIDKWLQHHLTCPKCR) adopts an RING-type; atypical zinc-finger fold.

The protein belongs to the RING-type zinc finger family. ATL subfamily.

The protein localises to the membrane. It catalyses the reaction S-ubiquitinyl-[E2 ubiquitin-conjugating enzyme]-L-cysteine + [acceptor protein]-L-lysine = [E2 ubiquitin-conjugating enzyme]-L-cysteine + N(6)-ubiquitinyl-[acceptor protein]-L-lysine.. Its pathway is protein modification; protein ubiquitination. E3 ubiquitin-protein ligase able to catalyze polyubiquitination with ubiquitin-conjugating enzyme E2 UBC8 in vitro. This is E3 ubiquitin-protein ligase ATL76 (ATL76) from Arabidopsis thaliana (Mouse-ear cress).